The sequence spans 246 residues: MTQSTRILLGVNIDHVATLRQARGTRYPDPVKAALDAEEAGADGITVHLREDRRHIQERDVLLLKDVLQTRMNFEMGVTEEMLAFAERIRPAHICLVPETRQELTTEGGLDVAGQEARIRSAVERLAKIGCEVSLFIDADERQIAASKRVGAPAIELHTGRYADAQTPTEVAEELQRVADGVAFGLAQGLIVNAGHGLHYHNVEAVAAIKGINELNIGHALVAHALFVGFKAAVAEMKALIVAAAR.

N12 is a 3-amino-2-oxopropyl phosphate binding site. Residue 14–15 participates in 1-deoxy-D-xylulose 5-phosphate binding; sequence DH. R23 is a binding site for 3-amino-2-oxopropyl phosphate. Residue H48 is the Proton acceptor of the active site. 1-deoxy-D-xylulose 5-phosphate is bound by residues R50 and H55. The active-site Proton acceptor is E75. T105 contacts 1-deoxy-D-xylulose 5-phosphate. H196 (proton donor) is an active-site residue. Residues G197 and 218–219 each bind 3-amino-2-oxopropyl phosphate; that span reads GH.

This sequence belongs to the PNP synthase family. Homooctamer; tetramer of dimers.

The protein resides in the cytoplasm. It catalyses the reaction 3-amino-2-oxopropyl phosphate + 1-deoxy-D-xylulose 5-phosphate = pyridoxine 5'-phosphate + phosphate + 2 H2O + H(+). It functions in the pathway cofactor biosynthesis; pyridoxine 5'-phosphate biosynthesis; pyridoxine 5'-phosphate from D-erythrose 4-phosphate: step 5/5. In terms of biological role, catalyzes the complicated ring closure reaction between the two acyclic compounds 1-deoxy-D-xylulose-5-phosphate (DXP) and 3-amino-2-oxopropyl phosphate (1-amino-acetone-3-phosphate or AAP) to form pyridoxine 5'-phosphate (PNP) and inorganic phosphate. This Pseudomonas savastanoi pv. phaseolicola (strain 1448A / Race 6) (Pseudomonas syringae pv. phaseolicola (strain 1448A / Race 6)) protein is Pyridoxine 5'-phosphate synthase.